A 284-amino-acid polypeptide reads, in one-letter code: 2-dehydro-3-deoxyphosphooctonate aldolase (284 aa).

This sequence belongs to the KdsA family.

The protein resides in the cytoplasm. The enzyme catalyses D-arabinose 5-phosphate + phosphoenolpyruvate + H2O = 3-deoxy-alpha-D-manno-2-octulosonate-8-phosphate + phosphate. It participates in carbohydrate biosynthesis; 3-deoxy-D-manno-octulosonate biosynthesis; 3-deoxy-D-manno-octulosonate from D-ribulose 5-phosphate: step 2/3. It functions in the pathway bacterial outer membrane biogenesis; lipopolysaccharide biosynthesis. The sequence is that of 2-dehydro-3-deoxyphosphooctonate aldolase from Photorhabdus laumondii subsp. laumondii (strain DSM 15139 / CIP 105565 / TT01) (Photorhabdus luminescens subsp. laumondii).